The following is a 92-amino-acid chain: MARSLKKGPFVADHLLSKVEALNARGERQVIKTWSRASTILPQMIGHTIAVHNGRQHVPVYVTEQMVGHKLGEFAPTRTFRSHTKGDKKARY.

Belongs to the universal ribosomal protein uS19 family.

Its function is as follows. Protein S19 forms a complex with S13 that binds strongly to the 16S ribosomal RNA. This is Small ribosomal subunit protein uS19 from Cyanothece sp. (strain PCC 7425 / ATCC 29141).